The sequence spans 244 residues: Pyridoxal phosphate homeostasis protein (244 aa).

Lys37 carries the post-translational modification N6-(pyridoxal phosphate)lysine.

This sequence belongs to the pyridoxal phosphate-binding protein YggS/PROSC family.

Pyridoxal 5'-phosphate (PLP)-binding protein, which may be involved in intracellular homeostatic regulation of pyridoxal 5'-phosphate (PLP), the active form of vitamin B6. The sequence is that of Pyridoxal phosphate homeostasis protein from Caenorhabditis elegans.